The following is a 292-amino-acid chain: Transmembrane and ubiquitin-like domain-containing protein 1 (292 aa).

The helical transmembrane segment at 11-31 threads the bilayer; sequence VTLLFGVVFLVLVLVLAWAST. Residues 34–143 are disordered; it reads VEPPEHLLSP…TQPSAEDAAS (110 aa). The segment covering 71–80 has biased composition (basic and acidic residues); it reads VRDEDDKSEP. A compositionally biased stretch (low complexity) spans 84–94; sequence AGAAGQSADGS. Positions 149-222 constitute a Ubiquitin-like domain; that stretch reads MVLRLKFLND…LHCHISQHAT (74 aa). 2 consecutive transmembrane segments (helical) span residues 237 to 257 and 269 to 289; these read VALN…SVLW and APAT…AFGV.

The protein localises to the membrane. It is found in the cytoplasm. Its subcellular location is the nucleus. Functionally, may contribute to the regulation of translation during cell-cycle progression. May contribute to the regulation of cell proliferation. The membrane form is involved in sterol-regulated ubiquitination and degradation of HMG-CoA reductase HMGCR. May be involved in centrosome assembly. In Danio rerio (Zebrafish), this protein is Transmembrane and ubiquitin-like domain-containing protein 1 (tmub1).